The chain runs to 708 residues: Leukotoxin translocation ATP-binding protein LktB (708 aa).

The region spanning 1 to 126 is the Peptidase C39 domain; sequence MEANHQRNDL…ACYQGQLILV (126 aa). The ABC transmembrane type-1 domain maps to 155-437; the sequence is FLETLIVSIF…LAQLWQDFQQ (283 aa). 5 helical membrane-spanning segments follow: residues 159–179, 192–212, 270–290, 296–316, and 389–409; these read LIVS…FQVV, LNII…LSGL, ALTS…MWYY, LVIL…SPIL, and VMVI…LSIG. Residues 469–704 enclose the ABC transporter domain; the sequence is ISFKNIRFRY…SNGLYSYLHQ (236 aa). Position 503–510 (503–510) interacts with ATP; sequence GRSGSGKS.

It belongs to the ABC transporter superfamily. Protein-1 exporter (TC 3.A.1.109) family. In terms of assembly, homodimer.

The protein localises to the cell inner membrane. It catalyses the reaction ATP + H2O + proteinSide 1 = ADP + phosphate + proteinSide 2.. Its function is as follows. Part of the ABC transporter complex LktBD involved in leukotoxin export. Transmembrane domains (TMD) form a pore in the inner membrane and the ATP-binding domain (NBD) is responsible for energy generation. In Mannheimia haemolytica (Pasteurella haemolytica), this protein is Leukotoxin translocation ATP-binding protein LktB (lktB).